We begin with the raw amino-acid sequence, 138 residues long: Cysteine desulfuration protein SufE (138 aa).

Cys51 (cysteine persulfide intermediate) is an active-site residue.

The protein belongs to the SufE family. Homodimer. Interacts with SufS.

It is found in the cytoplasm. It participates in cofactor biosynthesis; iron-sulfur cluster biosynthesis. Participates in cysteine desulfuration mediated by SufS. Cysteine desulfuration mobilizes sulfur from L-cysteine to yield L-alanine and constitutes an essential step in sulfur metabolism for biosynthesis of a variety of sulfur-containing biomolecules. Functions as a sulfur acceptor for SufS, by mediating the direct transfer of the sulfur atom from the S-sulfanylcysteine of SufS, an intermediate product of cysteine desulfuration process. The chain is Cysteine desulfuration protein SufE from Escherichia coli (strain K12 / MC4100 / BW2952).